A 301-amino-acid chain; its full sequence is Nucleosome assembly protein 1;3 (301 aa).

Residues 15 to 69 adopt a coiled-coil conformation; it reads VETLKNKLQALAEQHVDVLESLAPVVRKRVDVLIEIQSQHDELEAKFLEEKSALE. A Nuclear export signal motif is present at residues 36–51; sequence LAPVVRKRVDVLIEIQ. The segment at 279–301 is disordered; it reads EDYGASWVDDEEDDDDEYSDEEA. S297 carries the phosphoserine; by CK2 modification.

The protein belongs to the nucleosome assembly protein (NAP) family.

Its subcellular location is the nucleus. The protein localises to the cytoplasm. In terms of biological role, may modulate chromatin structure by regulation of nucleosome assembly/disassembly. This chain is Nucleosome assembly protein 1;3 (NAP1;3), found in Oryza sativa subsp. indica (Rice).